Reading from the N-terminus, the 414-residue chain is Dothistromin biosynthesis peroxidase dotB (414 aa).

A signal peptide spans 1-18; sequence MHFFSAIVLTCLASTAVA. Cys-72 lines the heme pocket. N-linked (GlcNAc...) asparagine glycans are attached at residues Asn-187, Asn-241, and Asn-328.

The protein belongs to the chloroperoxidase family. The cofactor is heme b.

Its pathway is mycotoxin biosynthesis. Its function is as follows. Peroxidase; part of the fragmented gene cluster that mediates the biosynthesis of dothistromin (DOTH), a polyketide toxin very similar in structure to the aflatoxin precursor, versicolorin B. The first step of the pathway is the conversion of acetate to norsolorinic acid (NOR) and requires the fatty acid synthase subunits hexA and hexB, as well as the polyketide synthase pksA. PksA combines a hexanoyl starter unit and 7 malonyl-CoA extender units to synthesize the precursor NOR. The hexanoyl starter unit is provided to the acyl-carrier protein (ACP) domain by the fungal fatty acid synthase hexA/hexB. The second step is the conversion of NOR to averantin (AVN) and requires the norsolorinic acid ketoreductase nor1, which catalyzes the dehydration of norsolorinic acid to form (1'S)-averantin. The cytochrome P450 monooxygenase avnA then catalyzes the hydroxylation of AVN to 5'hydroxyaverantin (HAVN). The next step is performed by adhA that transforms HAVN to averufin (AVF). Averufin might then be converted to hydroxyversicolorone by cypX and avfA. Hydroxyversicolorone is further converted versiconal hemiacetal acetate (VHA) by moxY. VHA is then the substrate for the versiconal hemiacetal acetate esterase est1 to yield versiconal (VAL). Versicolorin B synthase vbsA then converts VAL to versicolorin B (VERB) by closing the bisfuran ring. Then, the activity of the versicolorin B desaturase verB leads to versicolorin A (VERA). DotB, a predicted chloroperoxidase, may perform epoxidation of the A-ring of VERA. Alternatively, a cytochrome P450, such as cypX or avnA could catalyze this step. It is also possible that another, uncharacterized, cytochrome P450 enzyme is responsible for this step. Opening of the epoxide could potentially be achieved by the epoxide hydrolase epoA. However, epoA seems not to be required for DOTH biosynthesis, but other epoxide hydrolases may have the ability to complement this hydrolysis. Alternatively, opening of the epoxide ring could be achieved non-enzymatically. The next step is the deoxygenation of ring A to yield the 5,8-dihydroxyanthraquinone which is most likely catalyzed by the NADPH dehydrogenase encoded by ver1. The last stages of DOTH biosynthesis are proposed to involve hydroxylation of the bisfuran. OrdB and norB might have oxidative roles here. An alternative possibility is that cytochrome P450 monoogenases such as avnA and cypX might perform these steps in addition to previously proposed steps. In Dothistroma septosporum (Red band needle blight fungus), this protein is Dothistromin biosynthesis peroxidase dotB.